The primary structure comprises 916 residues: Chitin synthase B (916 aa).

2 disordered regions span residues 1 to 84 and 114 to 141; these read MAYQ…AGFH and SPYA…GGGL. An N-linked (GlcNAc...) asparagine glycan is attached at Asn18. Residues 60 to 75 are compositionally biased toward polar residues; the sequence is RGTSPVRPTSGYSLTE. N-linked (GlcNAc...) asparagine glycosylation is present at Asn546. Helical transmembrane passes span 572-594, 628-648, 663-683, 715-735, 743-763, 845-865, and 884-904; these read MFFL…FSLA, IINT…FILA, SFVV…YLVV, IIII…FMYL, SFPA…VYAF, LVTL…SDGM, and ALLW…CWFL.

This sequence belongs to the chitin synthase family. Class III subfamily.

Its subcellular location is the cell membrane. The enzyme catalyses [(1-&gt;4)-N-acetyl-beta-D-glucosaminyl](n) + UDP-N-acetyl-alpha-D-glucosamine = [(1-&gt;4)-N-acetyl-beta-D-glucosaminyl](n+1) + UDP + H(+). In terms of biological role, polymerizes chitin, a structural polymer of the cell wall and septum, by transferring the sugar moiety of UDP-GlcNAc to the non-reducing end of the growing chitin polymer. Involved in hyphal growth and more particularly in branching. The chain is Chitin synthase B from Aspergillus oryzae (strain ATCC 42149 / RIB 40) (Yellow koji mold).